The following is a 63-amino-acid chain: Large ribosomal subunit protein bL32 (63 aa).

Residues methionine 1–arginine 16 show a composition bias toward basic residues. The interval methionine 1–isoleucine 22 is disordered.

Belongs to the bacterial ribosomal protein bL32 family.

In Beijerinckia indica subsp. indica (strain ATCC 9039 / DSM 1715 / NCIMB 8712), this protein is Large ribosomal subunit protein bL32.